Here is a 98-residue protein sequence, read N- to C-terminus: Small ribosomal subunit protein bS6 (98 aa).

It belongs to the bacterial ribosomal protein bS6 family.

Its function is as follows. Binds together with bS18 to 16S ribosomal RNA. In Lacticaseibacillus paracasei (strain ATCC 334 / BCRC 17002 / CCUG 31169 / CIP 107868 / KCTC 3260 / NRRL B-441) (Lactobacillus paracasei), this protein is Small ribosomal subunit protein bS6.